Reading from the N-terminus, the 360-residue chain is Mitogen-activated protein kinase 1 (360 aa).

Alanine 2 is subject to N-acetylalanine. Positions 25–313 (YTNLSYIGEG…VEQALAHPYL (289 aa)) constitute a Protein kinase domain. Serine 29 is subject to Phosphoserine; by SGK1. Residues 31–39 (IGEGAYGMV) and lysine 54 contribute to the ATP site. Aspartate 149 (proton acceptor) is an active-site residue. The residue at position 185 (threonine 185) is a Phosphothreonine; by MAP2K1 and MAP2K2. The TXY signature appears at 185-187 (TEY). A Phosphotyrosine; by MAP2K1 and MAP2K2 modification is found at tyrosine 187. Position 190 is a phosphothreonine; by autocatalysis (threonine 190). Phosphoserine is present on residues serine 246 and serine 248. The DNA-binding element occupies 259 to 277 (KARNYLLSLPHKNKVPWNR). Serine 284 carries the phosphoserine modification. Residues 318 to 322 (DPSDE) carry the Cytoplasmic retention motif motif. The short motif at 327 to 333 (APFKFDM) is the Nuclear translocation motif element.

This sequence belongs to the protein kinase superfamily. CMGC Ser/Thr protein kinase family. MAP kinase subfamily. As to quaternary structure, binds both upstream activators and downstream substrates in multimolecular complexes. This interaction inhibits its tyrosine-kinase activity. Interacts with ADAM15, ARHGEF2, ARRB2, DAPK1 (via death domain), HSF4, IER3, IPO7, NISCH, SGK1, and isoform 1 of NEK2. Interacts (via phosphorylated form) with TPR (via C-terminal region and phosphorylated form); the interaction requires dimerization of MAPK1/ERK2 and increases following EGF stimulation. Interacts with MAP2K1. Interacts with DUSP6. Interacts (phosphorylated form) with CAV2 ('Tyr-19'-phosphorylated form); the interaction, promoted by insulin, leads to nuclear location and MAPK1 activation. Interacts with MORG1, PEA15 and MKNK2. MKNK2 isoform 1 binding prevents from dephosphorylation and inactivation. Interacts with DCC. The phosphorylated form interacts with PML (isoform PML-4). Interacts with STYX. Interacts with CDK2AP2. Interacts with CAVIN4. Interacts with DUSP7; the interaction enhances DUSP7 phosphatase activity. Interacts with GIT1; this interaction is necessary for MAPK1 localization to focal adhesions. Interacts with ZNF263. Interacts with phosphoglycerate kinase PGK1; the interaction is direct, occurs under hypoxic conditions, and promotes interaction between PGK1 and PIN1. In terms of assembly, (Microbial infection) Interacts with HIV-1 Nef through its SH3 domain. Mg(2+) serves as cofactor. Post-translationally, phosphorylated upon KIT and FLT3 signaling. Dually phosphorylated on Thr-185 and Tyr-187, which activates the enzyme. Undergoes regulatory phosphorylation on additional residues such as Ser-246 and Ser-248 in the kinase insert domain (KID) These phosphorylations, which are probably mediated by more than one kinase, are important for binding of MAPK1/ERK2 to importin-7 (IPO7) and its nuclear translocation. In addition, autophosphorylation of Thr-190 was shown to affect the subcellular localization of MAPK1/ERK2 as well. Ligand-activated ALK induces tyrosine phosphorylation. Dephosphorylated by PTPRJ at Tyr-187. Phosphorylation on Ser-29 by SGK1 results in its activation by enhancing its interaction with MAP2K1/MEK1 and MAP2K2/MEK2. DUSP3 and DUSP6 dephosphorylate specifically MAPK1/ERK2 and MAPK3/ERK1 whereas DUSP9 dephosphorylates a broader range of MAPKs. Dephosphorylated by DUSP1 and DUSP2 at Thr-185 and Tyr-187. In terms of processing, ISGylated. Ubiquitinated by TRIM15 via 'Lys-63'-linked ubiquitination; leading to activation. Deubiquitinated by CYLD.

It localises to the cytoplasm. It is found in the cytoskeleton. The protein resides in the spindle. The protein localises to the nucleus. Its subcellular location is the microtubule organizing center. It localises to the centrosome. It is found in the membrane. The protein resides in the caveola. The protein localises to the cell junction. Its subcellular location is the focal adhesion. It catalyses the reaction L-seryl-[protein] + ATP = O-phospho-L-seryl-[protein] + ADP + H(+). It carries out the reaction L-threonyl-[protein] + ATP = O-phospho-L-threonyl-[protein] + ADP + H(+). Phosphorylated by MAP2K1/MEK1 and MAP2K2/MEK2 on Thr-185 and Tyr-187 in response to external stimuli like insulin or NGF. Both phosphorylations are required for activity. This phosphorylation causes dramatic conformational changes, which enable full activation and interaction of MAPK1/ERK2 with its substrates. Phosphorylation on Ser-29 by SGK1 results in its activation by enhancing its interaction with MAP2K1/MEK1 and MAP2K2/MEK2. Dephosphorylated and inactivated by DUSP1, DUSP3, DUSP6 and DUSP9. Inactivated by pyrimidylpyrrole inhibitors. Serine/threonine kinase which acts as an essential component of the MAP kinase signal transduction pathway. MAPK1/ERK2 and MAPK3/ERK1 are the 2 MAPKs which play an important role in the MAPK/ERK cascade. They participate also in a signaling cascade initiated by activated KIT and KITLG/SCF. Depending on the cellular context, the MAPK/ERK cascade mediates diverse biological functions such as cell growth, adhesion, survival and differentiation through the regulation of transcription, translation, cytoskeletal rearrangements. The MAPK/ERK cascade also plays a role in initiation and regulation of meiosis, mitosis, and postmitotic functions in differentiated cells by phosphorylating a number of transcription factors. About 160 substrates have already been discovered for ERKs. Many of these substrates are localized in the nucleus, and seem to participate in the regulation of transcription upon stimulation. However, other substrates are found in the cytosol as well as in other cellular organelles, and those are responsible for processes such as translation, mitosis and apoptosis. Moreover, the MAPK/ERK cascade is also involved in the regulation of the endosomal dynamics, including lysosome processing and endosome cycling through the perinuclear recycling compartment (PNRC); as well as in the fragmentation of the Golgi apparatus during mitosis. The substrates include transcription factors (such as ATF2, BCL6, ELK1, ERF, FOS, HSF4 or SPZ1), cytoskeletal elements (such as CANX, CTTN, GJA1, MAP2, MAPT, PXN, SORBS3 or STMN1), regulators of apoptosis (such as BAD, BTG2, CASP9, DAPK1, IER3, MCL1 or PPARG), regulators of translation (such as EIF4EBP1 and FXR1) and a variety of other signaling-related molecules (like ARHGEF2, DCC, FRS2 or GRB10). Protein kinases (such as RAF1, RPS6KA1/RSK1, RPS6KA3/RSK2, RPS6KA2/RSK3, RPS6KA6/RSK4, SYK, MKNK1/MNK1, MKNK2/MNK2, RPS6KA5/MSK1, RPS6KA4/MSK2, MAPKAPK3 or MAPKAPK5) and phosphatases (such as DUSP1, DUSP4, DUSP6 or DUSP16) are other substrates which enable the propagation the MAPK/ERK signal to additional cytosolic and nuclear targets, thereby extending the specificity of the cascade. Mediates phosphorylation of TPR in response to EGF stimulation. May play a role in the spindle assembly checkpoint. Phosphorylates PML and promotes its interaction with PIN1, leading to PML degradation. Phosphorylates CDK2AP2. Phosphorylates phosphoglycerate kinase PGK1 under hypoxic conditions to promote its targeting to the mitochondrion and suppress the formation of acetyl-coenzyme A from pyruvate. Its function is as follows. Acts as a transcriptional repressor. Binds to a [GC]AAA[GC] consensus sequence. Repress the expression of interferon gamma-induced genes. Seems to bind to the promoter of CCL5, DMP1, IFIH1, IFITM1, IRF7, IRF9, LAMP3, OAS1, OAS2, OAS3 and STAT1. Transcriptional activity is independent of kinase activity. This is Mitogen-activated protein kinase 1 from Homo sapiens (Human).